The chain runs to 219 residues: uncharacterized protein (219 aa).

Residues I28–T50 form a helical membrane-spanning segment. Residues E155–F218 are a coiled coil.

The protein resides in the membrane. This is an uncharacterized protein from Aquifex aeolicus (strain VF5).